We begin with the raw amino-acid sequence, 149 residues long: Cytochrome c oxidase subunit 5A, mitochondrial (149 aa).

The protein belongs to the cytochrome c oxidase subunit 5A family. Component of the cytochrome c oxidase (complex IV, CIV), a multisubunit enzyme composed of a catalytic core of 3 subunits and several supernumerary subunits. The complex exists as a monomer or a dimer and forms supercomplexes (SCs) in the inner mitochondrial membrane with ubiquinol-cytochrome c oxidoreductase (cytochrome b-c1 complex, complex III, CIII).

The protein localises to the mitochondrion inner membrane. It participates in energy metabolism; oxidative phosphorylation. Its function is as follows. Component of the cytochrome c oxidase, the last enzyme in the mitochondrial electron transport chain which drives oxidative phosphorylation. The respiratory chain contains 3 multisubunit complexes succinate dehydrogenase (complex II, CII), ubiquinol-cytochrome c oxidoreductase (cytochrome b-c1 complex, complex III, CIII) and cytochrome c oxidase (complex IV, CIV), that cooperate to transfer electrons derived from NADH and succinate to molecular oxygen, creating an electrochemical gradient over the inner membrane that drives transmembrane transport and the ATP synthase. Cytochrome c oxidase is the component of the respiratory chain that catalyzes the reduction of oxygen to water. Electrons originating from reduced cytochrome c in the intermembrane space (IMS) are transferred via the dinuclear copper A center (CU(A)) of subunit 2 and heme A of subunit 1 to the active site in subunit 1, a binuclear center (BNC) formed by heme A3 and copper B (CU(B)). The BNC reduces molecular oxygen to 2 water molecules using 4 electrons from cytochrome c in the IMS and 4 protons from the mitochondrial matrix. This is Cytochrome c oxidase subunit 5A, mitochondrial from Drosophila melanogaster (Fruit fly).